The following is a 382-amino-acid chain: D-alanine--D-alanine ligase (382 aa).

Residues lysine 161–histidine 372 enclose the ATP-grasp domain. Residue valine 193–glutamate 248 participates in ATP binding. Residues aspartate 326, glutamate 339, and asparagine 341 each coordinate Mg(2+).

Belongs to the D-alanine--D-alanine ligase family. It depends on Mg(2+) as a cofactor. Requires Mn(2+) as cofactor.

The protein localises to the cytoplasm. It catalyses the reaction 2 D-alanine + ATP = D-alanyl-D-alanine + ADP + phosphate + H(+). Its pathway is cell wall biogenesis; peptidoglycan biosynthesis. Cell wall formation. The polypeptide is D-alanine--D-alanine ligase (Pseudarthrobacter chlorophenolicus (strain ATCC 700700 / DSM 12829 / CIP 107037 / JCM 12360 / KCTC 9906 / NCIMB 13794 / A6) (Arthrobacter chlorophenolicus)).